We begin with the raw amino-acid sequence, 456 residues long: RuvB-like 1 (456 aa).

A Glycyl lysine isopeptide (Lys-Gly) (interchain with G-Cter in SUMO2) cross-link involves residue lysine 2. 70-77 is an ATP binding site; that stretch reads GPPGTGKT. A Glycyl lysine isopeptide (Lys-Gly) (interchain with G-Cter in SUMO1); alternate cross-link involves residue lysine 225. Residue lysine 225 forms a Glycyl lysine isopeptide (Lys-Gly) (interchain with G-Cter in SUMO2); alternate linkage. Lysine 445 is covalently cross-linked (Glycyl lysine isopeptide (Lys-Gly) (interchain with G-Cter in SUMO2)). Lysine 453 carries the N6-acetyllysine modification.

Belongs to the RuvB family. As to quaternary structure, forms homohexameric rings. Can form a dodecamer with RUVBL2 made of two stacked hexameric rings; however, even though RUVBL1 and RUVBL2 are present in equimolar ratio, the oligomeric status of each hexamer is not known. Oligomerization may regulate binding to nucleic acids and conversely, binding to nucleic acids may affect the dodecameric assembly. Interaction of the complex with DHX34 results in conformational changes of the N-terminus of the RUVBL2 subunits, resulting in loss of nucleotide binding ability and ATP hydrolysis of the complex. Interacts with the transcriptional activation domain of MYC. Component of the RNA polymerase II holoenzyme complex. May also act to bridge the LEF1/TCF1-CTNNB1 complex and TBP. Component of the NuA4 histone acetyltransferase complex which contains the catalytic subunit KAT5/TIP60 and the subunits EP400, TRRAP/PAF400, BRD8/SMAP, EPC1, DMAP1/DNMAP1, RUVBL1/TIP49, RUVBL2, ING3, actin, ACTL6A/BAF53A, MORF4L1/MRG15, MORF4L2/MRGX, MRGBP, YEATS4/GAS41, VPS72/YL1 and MEAF6. The NuA4 complex interacts with MYC and the adenovirus E1A protein. RUVBL1 interacts with EP400. Component of a NuA4-related complex which contains EP400, TRRAP/PAF400, SRCAP, BRD8/SMAP, EPC1, DMAP1/DNMAP1, RUVBL1/TIP49, RUVBL2, actin, ACTL6A/BAF53A, VPS72 and YEATS4/GAS41. Component of the BAF53 complex, at least composed of ACTL6A/BAF53A, RUVBL1/TIP49, SMARCA2/BRM, and TRRAP/PAF400. Component of some MLL1/MLL complex, at least composed of the core components KMT2A/MLL1, ASH2L, HCFC1/HCF1, WDR5 and RBBP5, as well as the facultative components BACC1, CHD8, E2F6, HSP70, INO80C, KANSL1, LAS1L, MAX, MCRS1, MGA, MYST1/MOF, PELP1, PHF20, PRP31, RING2, RUVB1/TIP49A, RUVB2/TIP49B, SENP3, TAF1, TAF4, TAF6, TAF7, TAF9 and TEX10. Associates with alpha and gamma tubulins, particularly during metaphase and early anaphase. Interacts with NPAT. Component of the chromatin-remodeling INO80 complex; specifically part of a complex module associated with the helicase ATP-binding and the helicase C-terminal domain of INO80. Interacts with IGHMBP2. Interacts with OFD1. Interacts with HINT1. Component of a complex with USP49 and PSMC5. Component of a SWR1-like complex. Component of the R2TP complex composed at least of RUVBL1, RUVBL2, RPAP3 and PIHD1. Component of the PAQosome complex which is responsible for the biogenesis of several protein complexes and which consists of R2TP complex members RUVBL1, RUVBL2, RPAP3 and PIH1D1, URI complex members PFDN2, PFDN6, PDRG1, UXT and URI1 as well as ASDURF, POLR2E and DNAAF10/WDR92. Interacts with PIH1D1. Interacts with ITFG1. Interacts with WAC; WAC positively regulates MTOR activity by promoting the assembly of the TTT complex composed of TELO2, TTI1 and TTI2 and the RUVBL complex composed of RUVBL1 and RUVBL2 into the TTT-RUVBL complex which leads to the dimerization of the mTORC1 complex and its subsequent activation. The RUVBL1/RUVBL2 complex interacts with ZNHIT1 (via HIT-type zinc finger), ZNHIT3 (via HIT-type zinc finger), ZNHIT6 (via HIT-type zinc finger) and DDX59/ZNHIT5 (via HIT-type zinc finger) in the presence of ADP. Interacts with NOPCHAP1; the interaction is direct and disrupted upon ATP binding. Interacts with SMG1. Interacts with NOP2, NOP56 and NUFIP1. (Microbial infection) Interacts with Mumps L polymerase; this interaction regulates the viral transcription. In terms of tissue distribution, ubiquitously expressed with high expression in heart, skeletal muscle and testis.

The protein localises to the nucleus matrix. It is found in the nucleus. It localises to the nucleoplasm. Its subcellular location is the cytoplasm. The protein resides in the membrane. The protein localises to the cytoskeleton. It is found in the microtubule organizing center. It localises to the centrosome. Its subcellular location is the dynein axonemal particle. It catalyses the reaction ATP + H2O = ADP + phosphate + H(+). In terms of biological role, possesses single-stranded DNA-stimulated ATPase and ATP-dependent DNA helicase (3' to 5') activity; hexamerization is thought to be critical for ATP hydrolysis and adjacent subunits in the ring-like structure contribute to the ATPase activity. Component of the NuA4 histone acetyltransferase complex which is involved in transcriptional activation of select genes principally by acetylation of nucleosomal histones H4 and H2A. This modification may both alter nucleosome-DNA interactions and promote interaction of the modified histones with other proteins which positively regulate transcription. This complex may be required for the activation of transcriptional programs associated with oncogene and proto-oncogene mediated growth induction, tumor suppressor mediated growth arrest and replicative senescence, apoptosis, and DNA repair. The NuA4 complex ATPase and helicase activities seem to be, at least in part, contributed by the association of RUVBL1 and RUVBL2 with EP400. NuA4 may also play a direct role in DNA repair when recruited to sites of DNA damage. Component of a SWR1-like complex that specifically mediates the removal of histone H2A.Z/H2AZ1 from the nucleosome. Proposed core component of the chromatin remodeling INO80 complex which exhibits DNA- and nucleosome-activated ATPase activity and catalyzes ATP-dependent nucleosome sliding. Plays an essential role in oncogenic transformation by MYC and also modulates transcriptional activation by the LEF1/TCF1-CTNNB1 complex. Essential for cell proliferation. May be able to bind plasminogen at cell surface and enhance plasminogen activation. The polypeptide is RuvB-like 1 (Homo sapiens (Human)).